The chain runs to 159 residues: Transcriptional repressor NrdR (159 aa).

The segment at 3 to 34 is a zinc-finger region; sequence CPFCGGVENKVMDSRVSRDGNAIRRRRECLAC. The region spanning 49–139 is the ATP-cone domain; the sequence is PTVVKKDGRR…VYRQFRDVND (91 aa).

The protein belongs to the NrdR family. Zn(2+) is required as a cofactor.

Negatively regulates transcription of bacterial ribonucleotide reductase nrd genes and operons by binding to NrdR-boxes. The polypeptide is Transcriptional repressor NrdR (Syntrophus aciditrophicus (strain SB)).